We begin with the raw amino-acid sequence, 93 residues long: MSTDTGVSLPSYEEDQGSKLIRKAKEAPFVPVGIAGFAAIVAYGLYKLKSRGNTKMSIHLIHMRVAAQGFVVGAMTVGMGYSMYREFWAKPKP.

Positions 1–93 (MSTDTGVSLP…YREFWAKPKP (93 aa)) constitute an HIG1 domain. Ser2 is subject to N-acetylserine. Phosphoserine is present on Ser8. Transmembrane regions (helical) follow at residues 26–46 (EAPFVPVGIAGFAAIVAYGLY) and 60–80 (LIHMRVAAQGFVVGAMTVGMG).

As to quaternary structure, associates with cytochrome c oxidase (COX, complex IV); proposed complex component. Also associates with respiratory chain supercomplexes.

It localises to the mitochondrion membrane. The protein localises to the mitochondrion inner membrane. Proposed subunit of cytochrome c oxidase (COX, complex IV), which is the terminal component of the mitochondrial respiratory chain that catalyzes the reduction of oxygen to water. May play a role in the assembly of respiratory supercomplexes. This Homo sapiens (Human) protein is HIG1 domain family member 1A, mitochondrial (HIGD1A).